The following is a 307-amino-acid chain: Glycine--tRNA ligase alpha subunit (307 aa).

The protein belongs to the class-II aminoacyl-tRNA synthetase family. As to quaternary structure, tetramer of two alpha and two beta subunits.

It is found in the cytoplasm. It carries out the reaction tRNA(Gly) + glycine + ATP = glycyl-tRNA(Gly) + AMP + diphosphate. This chain is Glycine--tRNA ligase alpha subunit, found in Levilactobacillus brevis (strain ATCC 367 / BCRC 12310 / CIP 105137 / JCM 1170 / LMG 11437 / NCIMB 947 / NCTC 947) (Lactobacillus brevis).